The following is a 520-amino-acid chain: RNA-binding protein MEX3A (520 aa).

A disordered region spans residues 49-111 (GLGEPPAPTA…QPPTAPKGAS (63 aa)). Residues 60-69 (EDGGGGGGGA) show a composition bias toward gly residues. The span at 73 to 91 (PAAPPQPAPPPPPAAPPAA) shows a compositional bias: pro residues. 2 consecutive KH domains span residues 132–193 (TTEC…RREI) and 223–284 (QVTI…REEI). At serine 338 the chain carries Phosphoserine. The disordered stretch occupies residues 412-461 (SSSSAKARAGPPGAHRSPATSAGPELAGLPRRPPGEPLQGFSKLGGGGLR). Position 462 is a phosphoserine (serine 462). The RING-type zinc-finger motif lies at 469 to 509 (CMVCFESEVTAALVPCGHNLFCMECAVRICERTDPECPVCH).

In terms of processing, phosphorylated. Highest levels found in fetal brain and testis. Detected also in thymus, salivary gland and uterus.

It localises to the cytoplasm. The protein localises to the nucleus. The protein resides in the P-body. RNA binding protein, may be involved in post-transcriptional regulatory mechanisms. This chain is RNA-binding protein MEX3A (MEX3A), found in Homo sapiens (Human).